A 331-amino-acid chain; its full sequence is Probable allantoicase (331 aa).

This sequence belongs to the allantoicase family.

The enzyme catalyses allantoate + H2O = (S)-ureidoglycolate + urea. The protein operates within nitrogen metabolism; (S)-allantoin degradation; (S)-ureidoglycolate from allantoate (aminidohydrolase route): step 1/1. The chain is Probable allantoicase from Pseudomonas savastanoi pv. phaseolicola (strain 1448A / Race 6) (Pseudomonas syringae pv. phaseolicola (strain 1448A / Race 6)).